Here is a 263-residue protein sequence, read N- to C-terminus: MALKHYKNSDSTVFNDAKALFDLNKNILLKGPTGSGKTKLAETLSEVVDTPMHQVNCSVDLDTESLLGFKTIKTNAEGQQEIVFVDGPVIKAMKEGHILYIDEINMAKPETLPVLNGVLDYRRQITNPYTGEVIKAVPGFNVIAAINEGYVGTLPMNEALKNRFVVIHVDYIDGDILKNVIKEQSLLQDDKQIEQIIKFNEDLRTMSKQGQISEEAASIRALLDLCDLITVMPVERAIKRTIIDKLEDEREQQAIYNAVELNF.

Residue 31-38 coordinates ATP; the sequence is GPTGSGKT.

Belongs to the CbbQ/NirQ/NorQ/GpvN family.

This is an uncharacterized protein from Staphylococcus aureus (strain NCTC 8325 / PS 47).